The primary structure comprises 227 residues: Prolactin (227 aa).

Positions 1–28 are cleaved as a signal peptide; it reads MDSKWSRRTGSLLLLLVSNLLLCKSTAS. Cysteines 32 and 39 form a disulfide. Serine 54, serine 62, and serine 118 each carry phosphoserine. 2 disulfides stabilise this stretch: cysteine 86-cysteine 202 and cysteine 219-cysteine 227.

The protein belongs to the somatotropin/prolactin family. In terms of assembly, interacts with PRLR.

Its subcellular location is the secreted. Its function is as follows. Prolactin acts primarily on the mammary gland by promoting lactation. The protein is Prolactin (PRL) of Oryctolagus cuniculus (Rabbit).